The primary structure comprises 62 residues: UPF0291 protein CLJ_B2839 (62 aa).

The protein belongs to the UPF0291 family.

Its subcellular location is the cytoplasm. This is UPF0291 protein CLJ_B2839 from Clostridium botulinum (strain 657 / Type Ba4).